A 343-amino-acid chain; its full sequence is Selenide, water dikinase (343 aa).

Sec-15 is an active-site residue. Sec-15 is a non-standard amino acid (selenocysteine). Residues Lys-18 and 45 to 47 (TAD) contribute to the ATP site. Asp-48 is a binding site for Mg(2+). ATP contacts are provided by residues Asp-65, Asp-88, and 135–137 (GHT). A Mg(2+)-binding site is contributed by Asp-88. Residue Asp-223 coordinates Mg(2+).

This sequence belongs to the selenophosphate synthase 1 family. Class I subfamily. Homodimer. Mg(2+) serves as cofactor.

It catalyses the reaction hydrogenselenide + ATP + H2O = selenophosphate + AMP + phosphate + 2 H(+). Functionally, synthesizes selenophosphate from selenide and ATP. The chain is Selenide, water dikinase from Carboxydothermus hydrogenoformans (strain ATCC BAA-161 / DSM 6008 / Z-2901).